The following is an 807-amino-acid chain: cAMP-regulated phosphoprotein 21 (807 aa).

Residues 1–127 (MSEQGGLTPT…KNREKLSERP (127 aa)) form a disordered region. Residue S2 is modified to N-acetylserine. Residue S32 is modified to Phosphoserine. The stretch at 32–57 (SLDEEEKLELQRRLAAQNQERRKSKS) forms a coiled coil. At S55 the chain carries Phosphoserine; by PKA. Over residues 89–98 (IHLQLSSFPS) the composition is skewed to polar residues. The span at 101-127 (EEDKSRKDDSEREKEKDKNREKLSERP) shows a compositional bias: basic and acidic residues. S133 carries the phosphoserine modification. The R3H domain occupies 163–226 (RMILLKMEQE…SVIINKTSST (64 aa)). The region spanning 227-298 (RIPEQRFCEH…VRERIFAHDS (72 aa)) is the SUZ domain. A disordered region spans residues 245 to 282 (SQKRFILKRDNSSIDKEDNQNRMHPFRDDRRSKSIEER). Residues N265 and S298 each carry the phosphoserine modification. Disordered regions lie at residues 328–434 (LFRA…TSSV), 474–536 (GSIL…QPQM), 552–576 (SQLS…YPAS), and 595–627 (QLST…QQPP). Positions 337-348 (GRTSGSRQSSSE) are enriched in low complexity. Positions 349–358 (TELRWPDHQR) are enriched in basic and acidic residues. The span at 359-380 (AWSSTDSDSSNRNLKPTMTKTA) shows a compositional bias: polar residues. Phosphoserine is present on residues S361 and S381. The span at 401–421 (GKLSKTGSESSSSAGSSGSLS) shows a compositional bias: low complexity. Polar residues predominate over residues 422–434 (RTHPQSTALTSSV). The span at 514–524 (QQPPQQQPSPQ) shows a compositional bias: pro residues. Positions 525–535 (PQQQVQASQPQ) are enriched in low complexity. Polar residues-rich tracts occupy residues 552-563 (SQLSMSRQSSGD) and 595-613 (QLST…QQVL). S557 carries the post-translational modification Phosphoserine. R650 carries the post-translational modification Asymmetric dimethylarginine.

Interacts with CALM1. Post-translationally, phosphorylation of isoform 2 at Ser-55 is enhanced upon dopamine D1 receptor activation and favors interaction with CALM1. In terms of processing, methylated by CARM1 at Arg-650 in immature thymocytes. As to expression, present at high levels in thymus and low levels in brain. In thymus, isoform 1 is specifically found in immature thymocytes (at protein level).

It is found in the cytoplasm. Its function is as follows. May act as a competitive inhibitor of calmodulin-dependent enzymes such as calcineurin in neurons. This is cAMP-regulated phosphoprotein 21 (Arpp21) from Mus musculus (Mouse).